The sequence spans 2155 residues: Conidial pigment polyketide synthase PfmaE (2155 aa).

The N-terminal acylcarrier protein transacylase domain (SAT) stretch occupies residues 8–245 (LLFGDQSLDT…TAIPVYGPYH (238 aa)). The region spanning 381–813 (KCKLAIVGMA…GGNTGLLLED (433 aa)) is the Ketosynthase family 3 (KS3) domain. Active-site for beta-ketoacyl synthase activity residues include Cys-553, His-688, and His-731. Residues 910–1231 (AFMFTGQGSH…LCTLHSAGLN (322 aa)) form a malonyl-CoA:ACP transacylase (MAT) domain region. Ser-1001 acts as the For acyl/malonyl transferase activity in catalysis. Residues 1293–1608 (TTTVQKVVRE…PRKVLNVVLP (316 aa)) form a product template (PT) domain region. The N-terminal hotdog fold stretch occupies residues 1297–1428 (QKVVREEVKG…CKVFFGDNEE (132 aa)). One can recognise a PKS/mFAS DH domain in the interval 1297-1604 (QKVVREEVKG…FQAIPRKVLN (308 aa)). Residue His-1329 is the Proton acceptor; for dehydratase activity of the active site. The tract at residues 1455-1604 (DASKIGRGLA…FQAIPRKVLN (150 aa)) is C-terminal hotdog fold. The active-site Proton donor; for dehydratase activity is Asp-1516. Carrier domains are found at residues 1653–1730 (LTKN…AQFE) and 1779–1856 (GNVS…GIED). At Ser-1690 the chain carries O-(pantetheine 4'-phosphoryl)serine. The interval 1738–1782 (EENAHSSASSDSADMETESNFTTPSDDSEKDEVKGDAPAADGNVS) is disordered. Position 1816 is an O-(pantetheine 4'-phosphoryl)serine (Ser-1816). The interval 1855–1892 (EDKPKRAAPKSAKQEPAKPEPKVQGEAKAHTNPVDNYP) is disordered. Positions 1866 to 1883 (AKQEPAKPEPKVQGEAKA) are enriched in basic and acidic residues. The thioesterase (TE) domain stretch occupies residues 1911-2041 (QLFMIPDGSG…LGEGDDAEAK (131 aa)).

Its pathway is pigment biosynthesis; melanin biosynthesis. Non-reducing polyketide synthase; part of the gene cluster that mediates the biosynthesis of dihydroxynaphthalene (DHN)-melanin, a bluish-green pigment forming a dark layer in the conidial wall that protects the conidia from UV radiations. The first step of the pathway is the production of the pentaketide 1,3,6,8-tetrahydroxynaphthalene (1,3,6,8-THN or T4HN) by the polyketide synthase PfmaE though condensation of acetyl-CoA with malonyl-CoA. T4HN is not stable and easily oxidizes into the stable form flaviolin. T4HN is also substrate of the hydroxynaphthalene reductase PfmaG to yield scytalone. The scytalone dehydratase PfmaJ then reduces scytalone to 1,3,8-THN. 1,3,8-THN is then substrate of the hydroxynaphthalene reductase PfmaI to yield vermelone. Vermelone is further converted by the multicopper oxidase PfmaD to 1,8-DHN. Finally the laccase PFICI_06862 transforms 1,8-DHN to DHN-melanin. The roles of the 5-oxoprolinase PfmaA and the proline iminopeptidase PfmaB within the cluster have not been elucidated yet. The polypeptide is Conidial pigment polyketide synthase PfmaE (Pestalotiopsis fici (strain W106-1 / CGMCC3.15140)).